The following is a 131-amino-acid chain: GATA zinc finger domain-containing protein 2 (131 aa).

Residues 21–55 show a composition bias toward low complexity; the sequence is STATDATSADGAASETDAASATDTTSATDPTSATD. The segment at 21–85 is disordered; sequence STATDATSAD…RGRPYISTPP (65 aa). Polar residues predominate over residues 57 to 74; the sequence is IATTNTTGITSSGPTTNG. Residues 88–115 form a GATA-type zinc finger; that stretch reads CYDCGRTRSPYWRKGTYNGQVVHLCNAC.

This Dictyostelium discoideum (Social amoeba) protein is GATA zinc finger domain-containing protein 2 (comH).